A 252-amino-acid chain; its full sequence is Transcriptional regulatory protein HptR (252 aa).

In terms of domain architecture, Response regulatory spans 3 to 118; it reads KVVICDDERI…QLEVILGRLV (116 aa). Asp-55 carries the post-translational modification 4-aspartylphosphate. The 98-residue stretch at 153 to 250 folds into the HTH araC/xylS-type domain; the sequence is NQIVDQIKQS…QMSPSDYCKQ (98 aa). DNA-binding regions (H-T-H motif) lie at residues 170-191 and 217-240; these read SDLIQHIDVSESYAMRTFKDHV and HYEIADKVGFSEYKMFSYHFKKYL.

In terms of processing, phosphorylated by HptS.

The protein localises to the cytoplasm. Its function is as follows. Member of the two-component regulatory system HptS/HptR that regulates genes involved in hexose phosphate transport system in response to changes in extracellular phosphate sources. Activates uhpT expression to facilitate glucose-6-phosphate/G6P utilization by directly binding to its promoter. Antagonizes CcpA-dependent transcription of a subset of CcpA-regulated genes involved in antibiotic susceptibility. This chain is Transcriptional regulatory protein HptR (hptR), found in Staphylococcus aureus (strain Mu50 / ATCC 700699).